The sequence spans 342 residues: Holliday junction branch migration complex subunit RuvB (342 aa).

The interval M1–A21 is disordered. Residues M1–Y184 form a large ATPase domain (RuvB-L) region. ATP-binding positions include L23, R24, G65, K68, T69, T70, E131–F133, R174, Y184, and R221. T69 serves as a coordination point for Mg(2+). The interval E185–E255 is small ATPAse domain (RuvB-S). The tract at residues P258–F342 is head domain (RuvB-H). DNA contacts are provided by R313 and R318.

It belongs to the RuvB family. As to quaternary structure, homohexamer. Forms an RuvA(8)-RuvB(12)-Holliday junction (HJ) complex. HJ DNA is sandwiched between 2 RuvA tetramers; dsDNA enters through RuvA and exits via RuvB. An RuvB hexamer assembles on each DNA strand where it exits the tetramer. Each RuvB hexamer is contacted by two RuvA subunits (via domain III) on 2 adjacent RuvB subunits; this complex drives branch migration. In the full resolvosome a probable DNA-RuvA(4)-RuvB(12)-RuvC(2) complex forms which resolves the HJ.

The protein resides in the cytoplasm. The enzyme catalyses ATP + H2O = ADP + phosphate + H(+). Functionally, the RuvA-RuvB-RuvC complex processes Holliday junction (HJ) DNA during genetic recombination and DNA repair, while the RuvA-RuvB complex plays an important role in the rescue of blocked DNA replication forks via replication fork reversal (RFR). RuvA specifically binds to HJ cruciform DNA, conferring on it an open structure. The RuvB hexamer acts as an ATP-dependent pump, pulling dsDNA into and through the RuvAB complex. RuvB forms 2 homohexamers on either side of HJ DNA bound by 1 or 2 RuvA tetramers; 4 subunits per hexamer contact DNA at a time. Coordinated motions by a converter formed by DNA-disengaged RuvB subunits stimulates ATP hydrolysis and nucleotide exchange. Immobilization of the converter enables RuvB to convert the ATP-contained energy into a lever motion, pulling 2 nucleotides of DNA out of the RuvA tetramer per ATP hydrolyzed, thus driving DNA branch migration. The RuvB motors rotate together with the DNA substrate, which together with the progressing nucleotide cycle form the mechanistic basis for DNA recombination by continuous HJ branch migration. Branch migration allows RuvC to scan DNA until it finds its consensus sequence, where it cleaves and resolves cruciform DNA. This Cutibacterium acnes (strain DSM 16379 / KPA171202) (Propionibacterium acnes) protein is Holliday junction branch migration complex subunit RuvB.